The following is a 112-amino-acid chain: Urease subunit beta (112 aa).

This sequence belongs to the urease beta subunit family. As to quaternary structure, heterotrimer of UreA (gamma), UreB (beta) and UreC (alpha) subunits. Three heterotrimers associate to form the active enzyme.

It localises to the cytoplasm. It catalyses the reaction urea + 2 H2O + H(+) = hydrogencarbonate + 2 NH4(+). Its pathway is nitrogen metabolism; urea degradation; CO(2) and NH(3) from urea (urease route): step 1/1. This Polaromonas sp. (strain JS666 / ATCC BAA-500) protein is Urease subunit beta.